The following is a 541-amino-acid chain: Arginine--tRNA ligase (541 aa).

A 'HIGH' region motif is present at residues 123-133 (ANPTGFLHIGH).

This sequence belongs to the class-I aminoacyl-tRNA synthetase family. As to quaternary structure, monomer.

Its subcellular location is the cytoplasm. It catalyses the reaction tRNA(Arg) + L-arginine + ATP = L-arginyl-tRNA(Arg) + AMP + diphosphate. The chain is Arginine--tRNA ligase from Metamycoplasma arthritidis (strain 158L3-1) (Mycoplasma arthritidis).